We begin with the raw amino-acid sequence, 654 residues long: Hepatocyte growth factor activator serine proteases (654 aa).

The first 33 residues, 1–33 (MGRWAWGPSLCPLPGMALLLLLLLLLVPHGAQP), serve as a signal peptide directing secretion. A disordered region spans residues 34-100 (QAGGNLTEPP…SSSPGDPVLT (67 aa)). Residues 34–370 (QAGGNLTEPP…RLAACESLAR (337 aa)) constitute a propeptide, removed in mature form. Residues Asn-38 and Asn-46 are each glycosylated (N-linked (GlcNAc...) asparagine). Positions 57 to 81 (PVTSVTPVTPATSAPEAQGPRGRGL) are enriched in low complexity. The region spanning 101–148 (VDGQPCRFPFRYGGRMLHACTSEGSAHRKWCATTHNYDRDRAWGYCVQ) is the Fibronectin type-II domain. Disulfide bonds link Cys-106–Cys-131, Cys-120–Cys-146, Cys-162–Cys-173, Cys-167–Cys-184, Cys-186–Cys-195, Cys-200–Cys-228, Cys-226–Cys-235, Cys-243–Cys-254, Cys-248–Cys-265, Cys-267–Cys-276, Cys-284–Cys-365, Cys-305–Cys-347, Cys-336–Cys-360, Cys-393–Cys-520, Cys-431–Cys-447, Cys-439–Cys-509, Cys-534–Cys-603, Cys-566–Cys-582, and Cys-593–Cys-621. Positions 158-196 (ALDSCASSPCLNGGSCSHTQDPGSYHCTCPMAFTGRNCD) constitute an EGF-like 1 domain. One can recognise a Fibronectin type-I domain in the interval 198–238 (EKCFDETRYEHLEAGDRWARVSQGQVEQCECAGGQIRCEGT). The region spanning 239 to 277 (RHTACLSSPCLNGGTCHLIVATGTTVCSCPPGHAGRLCN) is the EGF-like 2 domain. Residues 283–365 (RCFVGNGTEY…SWEYCRLAAC (83 aa)) form the Kringle domain. An N-linked (GlcNAc...) asparagine glycan is attached at Asn-288. One can recognise a Peptidase S1 domain in the interval 407–645 (IIGGSSSLPG…YVDWIKDRIW (239 aa)). The active-site Charge relay system is His-446. Residues Asn-467 and Asn-491 are each glycosylated (N-linked (GlcNAc...) asparagine). Asp-496 functions as the Charge relay system in the catalytic mechanism. An N-linked (GlcNAc...) asparagine glycan is attached at Asn-545. The active-site Charge relay system is the Ser-597.

The protein belongs to the peptidase S1 family. As to quaternary structure, heterodimer of a short chain and a long chain linked by a disulfide bond. Post-translationally, the active form of HGFAC presents in the serum is derived from the COOH-terminal region of the precursor by the cleavage of bonds between Arg-370 and Ile-371 and Arg-406 and Ile-407. Liver.

The protein localises to the secreted. Its function is as follows. Serine protease that hydrolyzes the inactive zymogen hepatocyte growth factor (HGFsc) to an activated disulfide-linked heterodimer, then initiating hepatocyte growth factor receptor signaling pathway. This chain is Hepatocyte growth factor activator serine proteases (HGFAC), found in Canis lupus familiaris (Dog).